A 41-amino-acid polypeptide reads, in one-letter code: Large ribosomal subunit protein bL36 (41 aa).

It belongs to the bacterial ribosomal protein bL36 family.

This is Large ribosomal subunit protein bL36 from Parvibaculum lavamentivorans (strain DS-1 / DSM 13023 / NCIMB 13966).